The chain runs to 313 residues: Olfactory receptor 56A5 (313 aa).

The Extracellular portion of the chain corresponds to 1-33; sequence MTLPSNNSTSPVFEFFLICFPSFQSWQHWLSLP. N6 and N7 each carry an N-linked (GlcNAc...) asparagine glycan. The helical transmembrane segment at 34 to 54 threads the bilayer; it reads LSLLFLLAMGANATLLITIYL. The Cytoplasmic portion of the chain corresponds to 55-67; the sequence is EASLHQPLYYLLS. Residues 68–88 form a helical membrane-spanning segment; sequence LLSLLDIVLCLTVIPKVLAIF. Residues 89–100 lie on the Extracellular side of the membrane; sequence WFDLRSISFPAC. A disulfide bond links C100 and C182. A helical transmembrane segment spans residues 101–121; the sequence is FLQVFIMNSFLTMESCTFMIM. The Cytoplasmic portion of the chain corresponds to 122-146; sequence AYDRYVAICKPLQYSSIITDQFVAR. A helical membrane pass occupies residues 147-167; that stretch reads AAIFVVARNGLLTMPIPILSS. At 168–203 the chain is on the extracellular side; the sequence is RLRYCAGHIIKNCICTNVSVSKLSCDDITLNQSYQF. Residues N184 and N198 are each glycosylated (N-linked (GlcNAc...) asparagine). The helical transmembrane segment at 204–224 threads the bilayer; the sequence is VIGWTLLGSDLILIVLSYFFI. At 225–246 the chain is on the cytoplasmic side; the sequence is LKTVLRIKGEGDMAKALGTCGS. The helical transmembrane segment at 247-267 threads the bilayer; that stretch reads HFILILFFTTVLLVLVITNLA. The Extracellular segment spans residues 268-276; the sequence is RKRIPPDVP. The chain crosses the membrane as a helical span at residues 277–297; that stretch reads ILLNILHHLIPPALNPIVYGV. Over 298 to 313 the chain is Cytoplasmic; sequence RTKEIKQGIQNLLRRL.

The protein belongs to the G-protein coupled receptor 1 family.

The protein resides in the cell membrane. Odorant receptor. This is Olfactory receptor 56A5 (OR56A5) from Homo sapiens (Human).